We begin with the raw amino-acid sequence, 140 residues long: Required for drug-induced death protein 1 (140 aa).

The interval 1–95 (MTVGARLRSK…DKPKKRYRRK (95 aa)) is disordered. A compositionally biased stretch (acidic residues) spans 29-53 (EETDAIVEHLEGEDEDPESQDCERE). A helical membrane pass occupies residues 118-140 (LQGFAAAYSAPFGVATSVVSFVR).

It is found in the membrane. Functionally, regulates drug efflux through modulation of ABCB1 localization and activity. The chain is Required for drug-induced death protein 1 from Rattus norvegicus (Rat).